Reading from the N-terminus, the 88-residue chain is HssA/B-like protein 9 (88 aa).

The segment covering 1–14 has biased composition (polar residues); sequence MSILSALTSISNPM. The tract at residues 1-26 is disordered; that stretch reads MSILSALTSISNPMKSSKSSVANGGG.

This sequence belongs to the hssA/B family.

The sequence is that of HssA/B-like protein 9 (hssl9) from Dictyostelium discoideum (Social amoeba).